Reading from the N-terminus, the 66-residue chain is Surface composition regulator (66 aa).

The protein belongs to the GlgS family.

In terms of biological role, major determinant of cell surface composition. Negatively regulates motility, adhesion and synthesis of biofilm exopolysaccharides. The polypeptide is Surface composition regulator (Shigella flexneri).